Consider the following 537-residue polypeptide: ATPase expression protein 2, mitochondrial (537 aa).

It belongs to the AEP2 family. Binds to the 5'UTR of the OLI1 mRNA.

It localises to the mitochondrion. In terms of biological role, required for translation of the mitochondrial OLI1 transcript coding for the mitochondrial ATP synthase subunit 9. The polypeptide is ATPase expression protein 2, mitochondrial (AEP2) (Eremothecium gossypii (strain ATCC 10895 / CBS 109.51 / FGSC 9923 / NRRL Y-1056) (Yeast)).